The sequence spans 239 residues: Uridylate kinase (239 aa).

10–13 (KLSG) contacts ATP. The interval 18–23 (GEQGYG) is involved in allosteric activation by GTP. Position 52 (Gly52) interacts with UMP. ATP-binding residues include Gly53 and Arg57. UMP-binding positions include Asp72 and 133–140 (TGNPYFST). ATP contacts are provided by Asn161, Tyr167, and Glu170.

It belongs to the UMP kinase family. As to quaternary structure, homohexamer.

It localises to the cytoplasm. The catalysed reaction is UMP + ATP = UDP + ADP. Its pathway is pyrimidine metabolism; CTP biosynthesis via de novo pathway; UDP from UMP (UMPK route): step 1/1. Its activity is regulated as follows. Allosterically activated by GTP. Inhibited by UTP. Functionally, catalyzes the reversible phosphorylation of UMP to UDP. The polypeptide is Uridylate kinase (Halalkalibacterium halodurans (strain ATCC BAA-125 / DSM 18197 / FERM 7344 / JCM 9153 / C-125) (Bacillus halodurans)).